Reading from the N-terminus, the 481-residue chain is Beta-1,3-glucan-binding protein (481 aa).

The signal sequence occupies residues 1 to 17 (MKVLVVFIFCLVRSTFG). The region spanning 19–123 (FEVPDALVEV…QKFVVKQLLD (105 aa)) is the CBM39 domain. Residues 211–481 (HRLTIRPVPS…EVDYVKVSAL (271 aa)) enclose the GH16 domain. N467 carries N-linked (GlcNAc...) asparagine glycosylation.

It belongs to the insect beta-1,3-glucan binding protein family. Post-translationally, the N-terminus is blocked. As to expression, hemolymph.

It is found in the secreted. Functionally, involved in the recognition of invading microorganisms. Binds specifically to beta-1,3-glucan and activates the phenoloxidase cascade. The polypeptide is Beta-1,3-glucan-binding protein (GRP) (Tenebrio molitor (Yellow mealworm beetle)).